We begin with the raw amino-acid sequence, 572 residues long: Urease subunit alpha (572 aa).

One can recognise a Urease domain in the interval 134 to 572 (GGIDSHIHFI…LPLTQRYFLF (439 aa)). Histidine 139, histidine 141, and lysine 222 together coordinate Ni(2+). At lysine 222 the chain carries N6-carboxylysine. Histidine 224 contacts substrate. Residues histidine 251 and histidine 277 each contribute to the Ni(2+) site. Histidine 325 (proton donor) is an active-site residue. Aspartate 365 is a Ni(2+) binding site.

Belongs to the metallo-dependent hydrolases superfamily. Urease alpha subunit family. As to quaternary structure, heterotrimer of UreA (gamma), UreB (beta) and UreC (alpha) subunits. Three heterotrimers associate to form the active enzyme. The cofactor is Ni cation. Carboxylation allows a single lysine to coordinate two nickel ions.

It localises to the cytoplasm. The enzyme catalyses urea + 2 H2O + H(+) = hydrogencarbonate + 2 NH4(+). It functions in the pathway nitrogen metabolism; urea degradation; CO(2) and NH(3) from urea (urease route): step 1/1. In Variovorax paradoxus (strain S110), this protein is Urease subunit alpha.